The following is an 843-amino-acid chain: MKLVQREAEKLALHNAGFLAQKRLARGLRLNYTEAVALIAAQILEFVRDGDRTVTDLMDLGKQLLGRRQVLPAVPHLLETVQVEGTFMDGTKLITVHDPISSDDGNLELALHGSFLPVPSLEKFSSVGVDDFPGEVRFCSGHIVLNLHRRALTLKVVNKADRPIQIGSHYHFIEANPYLVFDRQRAYGMRLNIPAGTAVRFEPGDAKTVTLVSIGGRKVIRGGNGIADGAVNRSQLNEVMEKVIAKGFGHEDYPDSSEGIIGDGTHDYIVDHEKYASMYGPTTGDKIRLGDTDLFAEIEKDYAIYGDECIFGGGKVLRDGMGQSAGYPASDCLDTVVTNAVVIDYTGIYKADIGINGGLIVAIGKAGNPDVMDMDGVNEEMIVGVNTEVIAAEGMIVTAGGIDCHVHFICPQLAEEAIASGITTLVGGGTGPAHGTCATTCTPSPSHMKLMLQSTDELPINMGFTGKGNTTKPDGLAEIIKAGAMGLKLHEDWGSTPAAIDNCLSVAEAFDIQVNIHTDTLNESGCVEHTIAAFKDRTIHTYHSEGAGGGHAPDIIKVCGVKNVLPSSTNPTRPFTLNTVDEHLDMLMVCHHLDRNIPEDVAFAESRIRAETIAAEDILHDMGAISIISSDSQAMGRIGEVITRTWQTANKMKRQRGRLPISSSPDAAEDNDNFRIRRYIAKYTINPAIVNGFSDFVGSVEVGKLADLVIWKPSFFGAKPEMVIKGGAIACANMGDPNASIPTPEPVMMRPMFGAFGGAGSANSIAFVSKAAKEAGVAVQYKLGKRVEAVGRVRGLTKLNMKLNDALPKIDVDPETYTVTADGEVLRCQPTPTVPLSRNYFLF.

One can recognise a Urease domain in the interval 400–843 (GGIDCHVHFI…VPLSRNYFLF (444 aa)). 3 residues coordinate Ni(2+): His-405, His-407, and Lys-488. Lys-488 bears the N6-carboxylysine mark. A substrate-binding site is contributed by His-490. Ni(2+) contacts are provided by His-517 and His-543. The active-site Proton donor is the His-591. Asp-631 lines the Ni(2+) pocket.

It in the C-terminal section; belongs to the metallo-dependent hydrolases superfamily. Urease alpha subunit family. In terms of assembly, homohexamer. Other oligomeric forms may exist depending on pH and presence of salts. It depends on Ni(2+) as a cofactor. In terms of processing, carboxylation allows a single lysine to coordinate two nickel ions.

The catalysed reaction is urea + 2 H2O + H(+) = hydrogencarbonate + 2 NH4(+). It participates in nitrogen metabolism; urea degradation; CO(2) and NH(3) from urea (urease route): step 1/1. Its function is as follows. Urea hydrolase involved in nitrogen recycling from ureide, purine, and arginine catabolism. This Oryza sativa subsp. indica (Rice) protein is Urease.